Reading from the N-terminus, the 184-residue chain is dCTP deaminase (184 aa).

Residues 107–112, 131–133, Gln-152, Tyr-166, and Gln-176 each bind dCTP; these read KSTYAR and TLE. Residue Glu-133 is the Proton donor/acceptor of the active site.

It belongs to the dCTP deaminase family. In terms of assembly, homotrimer.

It catalyses the reaction dCTP + H2O + H(+) = dUTP + NH4(+). It participates in pyrimidine metabolism; dUMP biosynthesis; dUMP from dCTP (dUTP route): step 1/2. Functionally, catalyzes the deamination of dCTP to dUTP. The chain is dCTP deaminase from Novosphingobium aromaticivorans (strain ATCC 700278 / DSM 12444 / CCUG 56034 / CIP 105152 / NBRC 16084 / F199).